We begin with the raw amino-acid sequence, 118 residues long: UPF0102 protein NE0711 (118 aa).

The protein belongs to the UPF0102 family.

The sequence is that of UPF0102 protein NE0711 from Nitrosomonas europaea (strain ATCC 19718 / CIP 103999 / KCTC 2705 / NBRC 14298).